The sequence spans 493 residues: Glycerol kinase (493 aa).

Thr-12 serves as a coordination point for ADP. ATP-binding residues include Thr-12, Thr-13, and Ser-14. Position 12 (Thr-12) interacts with sn-glycerol 3-phosphate. Position 16 (Arg-16) interacts with ADP. Residues Arg-82, Glu-83, Tyr-132, and Asp-239 each coordinate sn-glycerol 3-phosphate. Arg-82, Glu-83, Tyr-132, Asp-239, and Gln-240 together coordinate glycerol. Thr-261 and Gly-303 together coordinate ADP. The ATP site is built by Thr-261, Gly-303, Gln-307, and Gly-402. Residues Gly-402 and Asn-406 each contribute to the ADP site.

It belongs to the FGGY kinase family.

It catalyses the reaction glycerol + ATP = sn-glycerol 3-phosphate + ADP + H(+). It participates in polyol metabolism; glycerol degradation via glycerol kinase pathway; sn-glycerol 3-phosphate from glycerol: step 1/1. In terms of biological role, key enzyme in the regulation of glycerol uptake and metabolism. Catalyzes the phosphorylation of glycerol to yield sn-glycerol 3-phosphate. This Thermococcus gammatolerans (strain DSM 15229 / JCM 11827 / EJ3) protein is Glycerol kinase.